The following is a 328-amino-acid chain: Phosphatidylglycerol--prolipoprotein diacylglyceryl transferase (328 aa).

3 consecutive transmembrane segments (helical) span residues 15-35 (VIQG…ILIS), 57-77 (IFMF…STLV), and 106-126 (GMAI…TINT). R156 provides a ligand contact to a 1,2-diacyl-sn-glycero-3-phospho-(1'-sn-glycerol). Transmembrane regions (helical) follow at residues 242–262 (GFIF…IEYL) and 289–309 (ISMG…WIIV).

Belongs to the Lgt family.

It localises to the cell inner membrane. The catalysed reaction is L-cysteinyl-[prolipoprotein] + a 1,2-diacyl-sn-glycero-3-phospho-(1'-sn-glycerol) = an S-1,2-diacyl-sn-glyceryl-L-cysteinyl-[prolipoprotein] + sn-glycerol 1-phosphate + H(+). Its pathway is protein modification; lipoprotein biosynthesis (diacylglyceryl transfer). Functionally, catalyzes the transfer of the diacylglyceryl group from phosphatidylglycerol to the sulfhydryl group of the N-terminal cysteine of a prolipoprotein, the first step in the formation of mature lipoproteins. The sequence is that of Phosphatidylglycerol--prolipoprotein diacylglyceryl transferase from Borreliella burgdorferi (strain ATCC 35210 / DSM 4680 / CIP 102532 / B31) (Borrelia burgdorferi).